The following is a 369-amino-acid chain: Histidinol-phosphate aminotransferase 3 (369 aa).

K220 carries the post-translational modification N6-(pyridoxal phosphate)lysine.

This sequence belongs to the class-II pyridoxal-phosphate-dependent aminotransferase family. Histidinol-phosphate aminotransferase subfamily. Homodimer. It depends on pyridoxal 5'-phosphate as a cofactor.

The enzyme catalyses L-histidinol phosphate + 2-oxoglutarate = 3-(imidazol-4-yl)-2-oxopropyl phosphate + L-glutamate. It functions in the pathway amino-acid biosynthesis; L-histidine biosynthesis; L-histidine from 5-phospho-alpha-D-ribose 1-diphosphate: step 7/9. This Mesorhizobium japonicum (strain LMG 29417 / CECT 9101 / MAFF 303099) (Mesorhizobium loti (strain MAFF 303099)) protein is Histidinol-phosphate aminotransferase 3 (hisC3).